A 270-amino-acid chain; its full sequence is Tryptophan synthase alpha chain (270 aa).

Catalysis depends on proton acceptor residues Glu-57 and Asp-68.

It belongs to the TrpA family. In terms of assembly, tetramer of two alpha and two beta chains.

It carries out the reaction (1S,2R)-1-C-(indol-3-yl)glycerol 3-phosphate + L-serine = D-glyceraldehyde 3-phosphate + L-tryptophan + H2O. Its pathway is amino-acid biosynthesis; L-tryptophan biosynthesis; L-tryptophan from chorismate: step 5/5. The alpha subunit is responsible for the aldol cleavage of indoleglycerol phosphate to indole and glyceraldehyde 3-phosphate. This chain is Tryptophan synthase alpha chain, found in Mycobacterium leprae (strain Br4923).